A 174-amino-acid chain; its full sequence is Photosystem I assembly protein Ycf4 (174 aa).

2 consecutive transmembrane segments (helical) span residues 11–31 (LSNI…FLNG) and 56–76 (IILM…CLTI).

It belongs to the Ycf4 family.

It localises to the plastid. The protein resides in the chloroplast thylakoid membrane. In terms of biological role, seems to be required for the assembly of the photosystem I complex. The protein is Photosystem I assembly protein Ycf4 of Emiliania huxleyi (Coccolithophore).